A 529-amino-acid chain; its full sequence is Beta-hexosaminidase subunit alpha (529 aa).

The N-terminal stretch at 1-22 (MASSRLWFSLLLAAALAGRATA) is a signal peptide. Residues 23 to 88 (LWPWPQNIQT…PRPYLTGKRH (66 aa)) constitute a propeptide that is removed on maturation. A disulfide bridge links Cys58 with Cys104. Residues Asn115, Asn157, and Asn295 are each glycosylated (N-linked (GlcNAc...) asparagine). Cys277 and Cys328 are oxidised to a cystine. The active-site Proton donor is Glu323. The segment at 423–424 (NR) is critical for hydrolysis GM2 gangliosides. The cysteines at positions 505 and 522 are disulfide-linked.

The protein belongs to the glycosyl hydrolase 20 family. There are 3 beta-hexosaminidase isozymes: isozyme A (hexosaminidase A) is a heterodimer composed of one subunit alpha and one subunit beta (chain A and B); isozyme B (hexosaminidase B) is a homodimer of two beta subunits (two chains A and B); isozyme S (hexosaminidase S) is a homodimer of two alpha subunits. The composition of the dimer (isozyme A versus isozyme S) has a significant effect on the substrate specificity of the alpha subunit active site.

The protein resides in the lysosome. It carries out the reaction Hydrolysis of terminal non-reducing N-acetyl-D-hexosamine residues in N-acetyl-beta-D-hexosaminides.. The enzyme catalyses N-acetyl-beta-D-galactosaminyl-(1-&gt;4)-beta-D-3-sulfogalactosyl-(1-&gt;4)-beta-D-glucosyl-(1&lt;-&gt;1')-ceramide + H2O = a beta-D-3-sulfogalactosyl-(1-&gt;4)-beta-D-glucosyl-(1&lt;-&gt;1')-ceramide + N-acetyl-beta-D-galactosamine. It catalyses the reaction a ganglioside GM2 (d18:1(4E)) + H2O = a ganglioside GM3 (d18:1(4E)) + N-acetyl-beta-D-galactosamine. The catalysed reaction is a ganglioside GM2 + H2O = a ganglioside GM3 + N-acetyl-beta-D-galactosamine. It carries out the reaction beta-D-GalNAc-(1-&gt;4)-alpha-L-IdoA-(1-&gt;3)-beta-D-GalNAc-4-sulfate-(1-&gt;4)-alpha-L-IdoA-(1-&gt;3)-D-GalNAc-4-sulfate + H2O = alpha-L-IdoA-(1-&gt;3)-beta-D-GalNAc-4-sulfate-(1-&gt;4)-alpha-L-IdoA-(1-&gt;3)-D-GalNAc-4-sulfate + N-acetyl-D-galactosamine. The enzyme catalyses N-acetyl-beta-D-6-sulfogalactosaminyl-(1-&gt;4)-alpha-L-iduronyl-(1-&gt;3)-N-acetyl-D-6-sulfogalactosamine + H2O = alpha-L-iduronyl-(1-&gt;3)-N-acetyl-D-6-sulfogalactosamine + N-acetyl-D-6-sulfogalactosamine. Addition of GM2A stimulates the hydrolysis of sulfated glycosphingolipid SM2 and the ganglioside GM2. Its function is as follows. Hydrolyzes the non-reducing end N-acetyl-D-hexosamine and/or sulfated N-acetyl-D-hexosamine of glycoconjugates, such as the oligosaccharide moieties from proteins and neutral glycolipids, or from certain mucopolysaccharides. The isozyme S is as active as the isozyme A on the anionic bis-sulfated glycans, the chondroitin-6-sulfate trisaccharide (C6S-3), and the dermatan sulfate pentasaccharide, and the sulfated glycosphingolipid SM2. The isozyme B does not hydrolyze each of these substrates, however hydrolyzes efficiently neutral oligosaccharide. Only the isozyme A is responsible for the degradation of GM2 gangliosides in the presence of GM2A. The chain is Beta-hexosaminidase subunit alpha from Pongo abelii (Sumatran orangutan).